A 176-amino-acid chain; its full sequence is Ribosome maturation factor RimP (176 aa).

It belongs to the RimP family.

It is found in the cytoplasm. In terms of biological role, required for maturation of 30S ribosomal subunits. This chain is Ribosome maturation factor RimP, found in Mycolicibacterium vanbaalenii (strain DSM 7251 / JCM 13017 / BCRC 16820 / KCTC 9966 / NRRL B-24157 / PYR-1) (Mycobacterium vanbaalenii).